The following is a 540-amino-acid chain: Glucose-6-phosphate isomerase (540 aa).

Residue glutamate 350 is the Proton donor of the active site. Catalysis depends on residues histidine 381 and lysine 503.

It belongs to the GPI family.

It is found in the cytoplasm. It catalyses the reaction alpha-D-glucose 6-phosphate = beta-D-fructose 6-phosphate. It functions in the pathway carbohydrate biosynthesis; gluconeogenesis. The protein operates within carbohydrate degradation; glycolysis; D-glyceraldehyde 3-phosphate and glycerone phosphate from D-glucose: step 2/4. Functionally, catalyzes the reversible isomerization of glucose-6-phosphate to fructose-6-phosphate. This chain is Glucose-6-phosphate isomerase, found in Burkholderia orbicola (strain AU 1054).